The sequence spans 185 residues: Vomeronasal secretory protein 2 (185 aa).

A signal peptide spans 1-19 (MKSLLLTVTLSSLVATLQT). Residues Cys-80 and Cys-172 are joined by a disulfide bond.

The protein belongs to the calycin superfamily. Lipocalin family. In terms of tissue distribution, specifically expressed in vomeronasal and posterior glands of the nasal septum, the ducts of which open into the lumen of the vomeronasal organ.

Its subcellular location is the secreted. Functionally, transport of lipophilic molecules, possible pheromone-carrier. The polypeptide is Vomeronasal secretory protein 2 (Lcn4) (Mus musculus (Mouse)).